The sequence spans 229 residues: Large ribosomal subunit protein bL25 (229 aa).

Disordered regions lie at residues 1–21 and 182–229; these read MDIIKLNATRREDSGKSASSR and NAPE…KDKK. The segment covering 195–222 has biased composition (low complexity); the sequence is PAAGAPAAGAAAAPAAGAAAPAKGAAPA.

It belongs to the bacterial ribosomal protein bL25 family. CTC subfamily. As to quaternary structure, part of the 50S ribosomal subunit; part of the 5S rRNA/L5/L18/L25 subcomplex. Contacts the 5S rRNA. Binds to the 5S rRNA independently of L5 and L18.

In terms of biological role, this is one of the proteins that binds to the 5S RNA in the ribosome where it forms part of the central protuberance. This is Large ribosomal subunit protein bL25 from Sorangium cellulosum (strain So ce56) (Polyangium cellulosum (strain So ce56)).